Here is a 131-residue protein sequence, read N- to C-terminus: UPF0102 protein Ent638_3585 (131 aa).

A disordered region spans residues 1–20 (MAQIPAGADRPGKLSRKQTG).

It belongs to the UPF0102 family.

The chain is UPF0102 protein Ent638_3585 from Enterobacter sp. (strain 638).